The chain runs to 442 residues: Probable carboxypeptidase PAAG_00768 (442 aa).

The N-terminal stretch at 1–20 (MKLQYLVALLFVQAVPPVTA) is a signal peptide. The N-linked (GlcNAc...) asparagine glycan is linked to Asn-102. Asp-160 lines the Zn(2+) pocket. Catalysis depends on Glu-192, which acts as the Proton acceptor. Glu-193 contacts Zn(2+). N-linked (GlcNAc...) asparagine glycosylation occurs at Asn-343.

Belongs to the peptidase M20A family. Zn(2+) serves as cofactor.

The protein resides in the secreted. The polypeptide is Probable carboxypeptidase PAAG_00768 (Paracoccidioides lutzii (strain ATCC MYA-826 / Pb01) (Paracoccidioides brasiliensis)).